Consider the following 476-residue polypeptide: Glycogen synthase (476 aa).

ADP-alpha-D-glucose is bound at residue K15.

It belongs to the glycosyltransferase 1 family. Bacterial/plant glycogen synthase subfamily.

It carries out the reaction [(1-&gt;4)-alpha-D-glucosyl](n) + ADP-alpha-D-glucose = [(1-&gt;4)-alpha-D-glucosyl](n+1) + ADP + H(+). It functions in the pathway glycan biosynthesis; glycogen biosynthesis. Functionally, synthesizes alpha-1,4-glucan chains using ADP-glucose. The sequence is that of Glycogen synthase from Streptococcus agalactiae serotype Ia (strain ATCC 27591 / A909 / CDC SS700).